The following is a 107-amino-acid chain: ATP synthase subunit c (107 aa).

The next 3 helical transmembrane spans lie at 4-24 (IVFLMLALSGFAFAAEGSMNQ), 29-49 (FSILAAGLGLGVAALGGAIGM), and 74-94 (MFIALAMIEAQVIYALVIALI).

The protein belongs to the ATPase C chain family. In terms of assembly, F-type ATPases have 2 components, F(1) - the catalytic core - and F(0) - the membrane proton channel. F(1) has five subunits: alpha(3), beta(3), gamma(1), delta(1), epsilon(1). F(0) has three main subunits: a(1), b(2) and c(10-14). The alpha and beta chains form an alternating ring which encloses part of the gamma chain. F(1) is attached to F(0) by a central stalk formed by the gamma and epsilon chains, while a peripheral stalk is formed by the delta and b chains.

Its subcellular location is the cell inner membrane. F(1)F(0) ATP synthase produces ATP from ADP in the presence of a proton or sodium gradient. F-type ATPases consist of two structural domains, F(1) containing the extramembraneous catalytic core and F(0) containing the membrane proton channel, linked together by a central stalk and a peripheral stalk. During catalysis, ATP synthesis in the catalytic domain of F(1) is coupled via a rotary mechanism of the central stalk subunits to proton translocation. Functionally, key component of the F(0) channel; it plays a direct role in translocation across the membrane. A homomeric c-ring of between 10-14 subunits forms the central stalk rotor element with the F(1) delta and epsilon subunits. The protein is ATP synthase subunit c of Campylobacter lari (strain RM2100 / D67 / ATCC BAA-1060).